The sequence spans 253 residues: MTKPHDFKTRAIIVRKTKCGEADRILSLLTPDLGLIQGFAKSVRKTKSKLSGHLELFCYSEVSLARGKAIDTVTGSQTIQSFLNIRSSLQLSAMAFYVCELAFHFSPEESANPAIFQLLLSTLEELDNTTQAELCTKYFEIHLLEMSGYKPELRECANCHQKLLATTNYFSPESGGIICPDCRNTQTGIPISVNAVKVLRYIQENDIPNIYRLKINREILSELELAIRANIRFVLEKEPKALLWLDSLSRANL.

The protein belongs to the RecO family.

In terms of biological role, involved in DNA repair and RecF pathway recombination. The sequence is that of DNA repair protein RecO from Dehalococcoides mccartyi (strain ATCC BAA-2266 / KCTC 15142 / 195) (Dehalococcoides ethenogenes (strain 195)).